A 310-amino-acid chain; its full sequence is MSLHPASPRLASLLLFILALHDTLALRLCSFNVRSFGASKKENHEAMDIIVKIIKRCDLILLMEIKDSSNNICPMLMEKLNGNSRRSTTYNYVISSRLGRNTYKEQYAFVYKEKLVSVKTKYHYHDYQDGDTDVFSREPFVVWFHSPFTAVKDFVIVPLHTTPETSVKEIDELVDVYTDVRSQWKTENFIFMGDFNAGCSYVPKKAWQNIRLRTDPKFVWLIGDQEDTTVKKSTSCAYDRIVLCGQEIVNSVVPRSSGVFDFQKAYDLSEEEALDVSDHFPVEFKLQSSRAFTNNRKSVSLKKRKKGNRS.

The N-terminal stretch at 1 to 25 (MSLHPASPRLASLLLFILALHDTLA) is a signal peptide. Positions 40–56 (KKENHEAMDIIVKIIKR) match the Bipartite nuclear localization signal motif. Catalysis depends on residues Glu105 and His160. A disulfide bond links Cys199 and Cys236. Positions 289 to 310 (SRAFTNNRKSVSLKKRKKGNRS) are not required for free DNA-nuclease activity but required for activity towards liposome-coated DNA. Positions 301 to 307 (LKKRKKG) match the Nuclear localization signal motif.

It belongs to the DNase I family. Ca(2+) is required as a cofactor. Requires Mg(2+) as cofactor. Post-translationally, poly-ADP-ribosylated by PARP1. ADP-ribosylation negatively regulates enzymatic activity during apoptosis. In terms of tissue distribution, expressed at high levels in liver, spleen and testes. Expressed at lower levels in heart, lungs, skeletal muscle and kidney. Not expressed in brain. Predominantly expressed in macrophages; at protein level. Secreted by mononuclear phagocytes.

Its subcellular location is the nucleus. The protein localises to the endoplasmic reticulum. It is found in the secreted. With respect to regulation, inhibited by zinc. Inhibited by heparin and proteolysis by plasmin. Functionally, has DNA hydrolytic activity. Is capable of both single- and double-stranded DNA cleavage, producing DNA fragments with 3'-OH ends. Can cleave chromatin to nucleosomal units and cleaves nucleosomal and liposome-coated DNA. Acts in internucleosomal DNA fragmentation (INDF) during apoptosis and necrosis. The role in apoptosis includes myogenic and neuronal differentiation, and BCR-mediated clonal deletion of self-reactive B cells. Is active on chromatin in apoptotic cell-derived membrane-coated microparticles and thus suppresses anti-DNA autoimmunity. Together with DNASE1, plays a key role in degrading neutrophil extracellular traps (NETs). NETs are mainly composed of DNA fibers and are released by neutrophils to bind pathogens during inflammation. Degradation of intravascular NETs by DNASE1 and DNASE1L3 is required to prevent formation of clots that obstruct blood vessels and cause organ damage following inflammation. This chain is Deoxyribonuclease gamma, found in Mus musculus (Mouse).